Consider the following 122-residue polypeptide: Small ribosomal subunit protein uS13 (122 aa).

The segment at Gly-95–Lys-122 is disordered.

It belongs to the universal ribosomal protein uS13 family. In terms of assembly, part of the 30S ribosomal subunit. Forms a loose heterodimer with protein S19. Forms two bridges to the 50S subunit in the 70S ribosome.

Functionally, located at the top of the head of the 30S subunit, it contacts several helices of the 16S rRNA. In the 70S ribosome it contacts the 23S rRNA (bridge B1a) and protein L5 of the 50S subunit (bridge B1b), connecting the 2 subunits; these bridges are implicated in subunit movement. Contacts the tRNAs in the A and P-sites. This Rhodospirillum rubrum (strain ATCC 11170 / ATH 1.1.1 / DSM 467 / LMG 4362 / NCIMB 8255 / S1) protein is Small ribosomal subunit protein uS13.